The sequence spans 156 residues: dCTP deaminase (156 aa).

Residues 79–84 (RSSLAR), Asp-95, Gln-124, and Tyr-138 each bind dCTP.

It belongs to the dCTP deaminase family. In terms of assembly, homotrimer.

The catalysed reaction is dCTP + H2O + H(+) = dUTP + NH4(+). It participates in pyrimidine metabolism; dUMP biosynthesis; dUMP from dCTP (dUTP route): step 1/2. Its function is as follows. Catalyzes the deamination of dCTP to dUTP. This Pyrococcus furiosus (strain ATCC 43587 / DSM 3638 / JCM 8422 / Vc1) protein is dCTP deaminase.